The following is a 286-amino-acid chain: Phosphatidylserine decarboxylase proenzyme (286 aa).

Residues D90, H147, and S250 each act as charge relay system; for autoendoproteolytic cleavage activity in the active site. S250 functions as the Schiff-base intermediate with substrate; via pyruvic acid; for decarboxylase activity in the catalytic mechanism. S250 carries the pyruvic acid (Ser); by autocatalysis modification.

Belongs to the phosphatidylserine decarboxylase family. PSD-B subfamily. Prokaryotic type I sub-subfamily. Heterodimer of a large membrane-associated beta subunit and a small pyruvoyl-containing alpha subunit. It depends on pyruvate as a cofactor. Post-translationally, is synthesized initially as an inactive proenzyme. Formation of the active enzyme involves a self-maturation process in which the active site pyruvoyl group is generated from an internal serine residue via an autocatalytic post-translational modification. Two non-identical subunits are generated from the proenzyme in this reaction, and the pyruvate is formed at the N-terminus of the alpha chain, which is derived from the carboxyl end of the proenzyme. The autoendoproteolytic cleavage occurs by a canonical serine protease mechanism, in which the side chain hydroxyl group of the serine supplies its oxygen atom to form the C-terminus of the beta chain, while the remainder of the serine residue undergoes an oxidative deamination to produce ammonia and the pyruvoyl prosthetic group on the alpha chain. During this reaction, the Ser that is part of the protease active site of the proenzyme becomes the pyruvoyl prosthetic group, which constitutes an essential element of the active site of the mature decarboxylase.

The protein localises to the cell membrane. It carries out the reaction a 1,2-diacyl-sn-glycero-3-phospho-L-serine + H(+) = a 1,2-diacyl-sn-glycero-3-phosphoethanolamine + CO2. Its pathway is phospholipid metabolism; phosphatidylethanolamine biosynthesis; phosphatidylethanolamine from CDP-diacylglycerol: step 2/2. In terms of biological role, catalyzes the formation of phosphatidylethanolamine (PtdEtn) from phosphatidylserine (PtdSer). The polypeptide is Phosphatidylserine decarboxylase proenzyme (Psychromonas ingrahamii (strain DSM 17664 / CCUG 51855 / 37)).